The following is a 157-amino-acid chain: Histone H2B.3 (157 aa).

The interval 1-64 is disordered; the sequence is MAPKKEEKPA…DKKSKKKAKV (64 aa). Basic residues predominate over residues 26–42; that stretch reads KAVKAPKKKEKKAPAKK. Lys153 participates in a covalent cross-link: Glycyl lysine isopeptide (Lys-Gly) (interchain with G-Cter in ubiquitin).

The protein belongs to the histone H2B family. The nucleosome is a histone octamer containing two molecules each of H2A, H2B, H3 and H4 assembled in one H3-H4 heterotetramer and two H2A-H2B heterodimers. The octamer wraps approximately 147 bp of DNA. Post-translationally, monoubiquitinated to form H2BK143ub1; may give a specific tag for epigenetic transcriptional activation.

It is found in the nucleus. It localises to the chromosome. Core component of nucleosome. Nucleosomes wrap and compact DNA into chromatin, limiting DNA accessibility to the cellular machineries which require DNA as a template. Histones thereby play a central role in transcription regulation, DNA repair, DNA replication and chromosomal stability. DNA accessibility is regulated via a complex set of post-translational modifications of histones, also called histone code, and nucleosome remodeling. The protein is Histone H2B.3 of Volvox carteri (Green alga).